The primary structure comprises 235 residues: Ribonuclease 3 (235 aa).

In terms of domain architecture, RNase III spans 8-137 (PAELARRIGI…VIGAIFLSGG (130 aa)). Glutamate 50 provides a ligand contact to Mg(2+). Aspartate 54 is an active-site residue. The Mg(2+) site is built by aspartate 123 and glutamate 126. Glutamate 126 is an active-site residue. A DRBM domain is found at 163-232 (DNKTAFQEWV…AGRAMREWAG (70 aa)). Residues 211-235 (QGRTKKEAEQQAAGRAMREWAGRKG) form a disordered region. Positions 226–235 (AMREWAGRKG) are enriched in basic and acidic residues.

It belongs to the ribonuclease III family. In terms of assembly, homodimer. Mg(2+) serves as cofactor.

It localises to the cytoplasm. It catalyses the reaction Endonucleolytic cleavage to 5'-phosphomonoester.. In terms of biological role, digests double-stranded RNA. Involved in the processing of primary rRNA transcript to yield the immediate precursors to the large and small rRNAs (23S and 16S). Processes some mRNAs, and tRNAs when they are encoded in the rRNA operon. Processes pre-crRNA and tracrRNA of type II CRISPR loci if present in the organism. The chain is Ribonuclease 3 from Heliobacterium modesticaldum (strain ATCC 51547 / Ice1).